The primary structure comprises 339 residues: Centrosomal protein of 41 kDa (339 aa).

Positions 56–99 (RLEDSDSATSEADTDIAAKTNGKGSPEEQSPSPVQFINSTGAGD) are disordered. S62 and S65 each carry phosphoserine. Low complexity predominate over residues 62 to 73 (SATSEADTDIAA). T75 is subject to Phosphothreonine. A phosphoserine mark is found at S80 and S87. The segment covering 82–99 (EEQSPSPVQFINSTGAGD) has biased composition (polar residues). The Rhodanese domain maps to 135-232 (PDCPFLLLDV…LAQKFPEGLV (98 aa)). Residues 283 to 339 (DQGPANNPSRLNQNNSAGRDLKVPAGRGGQNLPTGCPTSHSNSRTLNSGHLQGKPWK) are disordered. Residues 286–299 (PANNPSRLNQNNSA) are compositionally biased toward polar residues. R309 carries the post-translational modification Omega-N-methylarginine. The span at 313 to 332 (NLPTGCPTSHSNSRTLNSGH) shows a compositional bias: polar residues.

It belongs to the CEP41 family. As to quaternary structure, found in a complex with TTLL6.

It is found in the cytoplasm. Its subcellular location is the cytoskeleton. The protein localises to the microtubule organizing center. The protein resides in the centrosome. It localises to the cell projection. It is found in the cilium. Its subcellular location is the cilium basal body. Its function is as follows. Required during ciliogenesis for tubulin glutamylation in cilium. Probably acts by participating in the transport of TTLL6, a tubulin polyglutamylase, between the basal body and the cilium. The polypeptide is Centrosomal protein of 41 kDa (Cep41) (Rattus norvegicus (Rat)).